We begin with the raw amino-acid sequence, 483 residues long: MKTLNRRDFPGAQYPERIIQFGEGNFLRAFVDWQIDLLNEHTDLNSGVVVVRPIETSFPPSLSTQDGLYTTIIRGLNEKGEAVSDARLIRSVNREISVYSEYDEFLKLAHNPEMRFVFSNTTEAGISYHAGDKFDDAPAVSYPAKLTRLLFERFSHFNGALDKGWIIIPCELIDYNGDALRELVLRYAQEWALPEAFIQWLDQANSFCSTLVDRIVTGYPRDEVAKLEEELGYHDGFLDTAEHFYLFVIQGPKSLATELRLDKYPLNVLIVDDIKPYKERKVAILNGAHTALVPVAFQAGLDTVGEAMNDAEICAFVEKAIYEEIIPVLDLPRDELESFASAVTGRFRNPYIKHQLLSIALNGMTKFRTRILPQLLAGQKANGTLPARLTFALAALIAFYRGERNGETYPVQDDAHWLERYQQLWSQYRDRVIGTQELVAIVLAEKDHWEQDLTQVPGLVEQVANDLDAILEKGMREAVRPLC.

NAD(+) is bound at residue 18–29 (IIQFGEGNFLRA).

Belongs to the mannitol dehydrogenase family. UxaB subfamily.

The enzyme catalyses D-altronate + NAD(+) = keto-D-tagaturonate + NADH + H(+). It functions in the pathway carbohydrate metabolism; pentose and glucuronate interconversion. This chain is Altronate oxidoreductase, found in Escherichia coli O1:K1 / APEC.